Consider the following 424-residue polypeptide: Dehydrogenase FUM7 (424 aa).

It belongs to the iron-containing alcohol dehydrogenase family. Fe cation is required as a cofactor.

It participates in mycotoxin biosynthesis. Dehydrogenase; part of the gene cluster that mediates the biosynthesis of fumonisins B1 (FB1), B2 (FB2), B3 (FB3), and B4 (FB4), which are carcinogenic mycotoxins. Within the pathway, FUM7 is involved the addition of the tricarballylic moieties to the carbon backbone. FUM7 dehydrogenase removes the C-3 hydroxyl of citrate to form tricarballylic acid either before or after the CoA activation by the FUM10 acyl-CoA synthetase and FUM14 catalyzed esterification of CoA-activated tricarballylic acid to the C-14 and C-15 hydroxyls of the fumonisin backbone. The biosynthesis starts with the FUM1-catalyzed carbon chain assembly from one molecule of acetyl-CoA, eight molecules of malonyl-CoA, and two molecules of methionine (in S-adenosyl form). The C18 polyketide chain is released from the enzyme by a nucleophilic attack of a carbanion, which is derived from R-carbon of alanine by decarboxylation, on the carbonyl carbon of polyketide acyl chain. This step is catalyzed by the pyridoxal 5'-phosphate-dependent aminoacyl transferase FUM8. The resultant 3-keto intermediate is then stereospecifically reduced to a 3-hydroxyl product by reductase FUM13. Subsequent oxidations at C-10 by the cytochrome P450 monooxygenase FUM2, C-14 and C-15 by FUM6, FUM12 or FUM15, tricarballylic esterification of the hydroxyl groups on C-14 and C-15 by acyltransferase FUM14, and C-5 hydroxylation by 2-keto-glutarate-dependent dioxygenase FUM3 furnish the biosynthesis of fumonisins. The tricarballylic moieties are most likely derived from the citric acid cycle, and their addition to the carbon backbone may involve FUM7, FUM10, FUM11 and FUM14. The chain is Dehydrogenase FUM7 from Gibberella moniliformis (strain M3125 / FGSC 7600) (Maize ear and stalk rot fungus).